Here is a 194-residue protein sequence, read N- to C-terminus: uncharacterized protein (194 aa).

The region spanning 34–192 is the SIS domain; it reads VMQCLLGGNK…CELVDQTLFP (159 aa).

Belongs to the SIS family. DiaA subfamily.

This is an uncharacterized protein from Haemophilus influenzae (strain ATCC 51907 / DSM 11121 / KW20 / Rd).